The chain runs to 290 residues: 1D-myo-inositol 2-acetamido-2-deoxy-alpha-D-glucopyranoside deacetylase (290 aa).

3 residues coordinate Zn(2+): His-17, Asp-20, and His-150.

The protein belongs to the MshB deacetylase family. Requires Zn(2+) as cofactor.

It carries out the reaction 1D-myo-inositol 2-acetamido-2-deoxy-alpha-D-glucopyranoside + H2O = 1D-myo-inositol 2-amino-2-deoxy-alpha-D-glucopyranoside + acetate. Functionally, catalyzes the deacetylation of 1D-myo-inositol 2-acetamido-2-deoxy-alpha-D-glucopyranoside (GlcNAc-Ins) in the mycothiol biosynthesis pathway. The sequence is that of 1D-myo-inositol 2-acetamido-2-deoxy-alpha-D-glucopyranoside deacetylase from Corynebacterium glutamicum (strain R).